Here is a 400-residue protein sequence, read N- to C-terminus: Enoyl-[acyl-carrier-protein] reductase [NADH] 1 (400 aa).

Residues Gly-48–Tyr-53, Phe-74–Glu-75, Asp-111–Ala-112, and Leu-139–Ala-140 each bind NAD(+). Residue Tyr-225 participates in substrate binding. Tyr-235 serves as the catalytic Proton donor. NAD(+) is bound by residues Lys-244 and Val-273–Thr-275.

Belongs to the TER reductase family. Monomer.

The enzyme catalyses a 2,3-saturated acyl-[ACP] + NAD(+) = a (2E)-enoyl-[ACP] + NADH + H(+). It functions in the pathway lipid metabolism; fatty acid biosynthesis. Functionally, involved in the final reduction of the elongation cycle of fatty acid synthesis (FAS II). Catalyzes the reduction of a carbon-carbon double bond in an enoyl moiety that is covalently linked to an acyl carrier protein (ACP). The chain is Enoyl-[acyl-carrier-protein] reductase [NADH] 1 from Photobacterium profundum (strain SS9).